The chain runs to 303 residues: Porphobilinogen deaminase (303 aa).

Cys-240 is subject to S-(dipyrrolylmethanemethyl)cysteine.

Belongs to the HMBS family. Monomer. Dipyrromethane is required as a cofactor.

The catalysed reaction is 4 porphobilinogen + H2O = hydroxymethylbilane + 4 NH4(+). Its pathway is porphyrin-containing compound metabolism; protoporphyrin-IX biosynthesis; coproporphyrinogen-III from 5-aminolevulinate: step 2/4. Tetrapolymerization of the monopyrrole PBG into the hydroxymethylbilane pre-uroporphyrinogen in several discrete steps. The protein is Porphobilinogen deaminase of Stenotrophomonas maltophilia (strain R551-3).